A 298-amino-acid chain; its full sequence is TLR adapter interacting with SLC15A4 on the lysosome (298 aa).

Positions 287–291 (SLHIS) match the pLxIS motif motif. Position 291 is a phosphoserine (Ser-291).

As to quaternary structure, interacts (via pLxIS motif) with IRF5; leading to IRF5 activation. Interacts with SLC15A4; leading to its recruitment to endolysosome. Post-translationally, the phosphorylated pLxIS motif constitutes an IRF5-binding motif, leading to recruitment of the transcription factor IRF5 to induce type-I interferons and other cytokines.

The protein resides in the lysosome membrane. It is found in the endosome membrane. Its subcellular location is the nucleus. It localises to the cytoplasm. In terms of biological role, innate immune adapter that mediates the recruitment and activation of IRF5 downstream of endolysosomal toll-like receptors TLR7, TLR8 and TLR9. Following recruitment to endolysosome by SLC15A4 downstream of TLR7, TLR8 and TLR9, specifically recruits IRF5 transcription factor via its pLxIS motif, leading to IRF5 activation and subsequent expression of type I interferons. Plays a role in the regulation of endolysosomal pH in immune cells such as B-cells, dendritic cells and monocytes. This Mus musculus (Mouse) protein is TLR adapter interacting with SLC15A4 on the lysosome.